Consider the following 359-residue polypeptide: Protein LpfD (359 aa).

The first 24 residues, 1 to 24 (MLKKLIMFTGLLGGSVLFSGQALA), serve as a signal peptide directing secretion.

Belongs to the fimbrial protein family.

It localises to the fimbrium. This Salmonella typhimurium (strain LT2 / SGSC1412 / ATCC 700720) protein is Protein LpfD (lpfD).